The following is a 536-amino-acid chain: Plasmepsin V (536 aa).

The signal sequence occupies residues 1–34 (MVGASLGPPGRGSLSRLIRLVICVLTLCALSVQG). At 35-492 (RSESTEGHSK…RKDNIFLKIP (458 aa)) the chain is on the lumenal side. Residues 62–462 (YFLDIDIGTP…DIQKNRIGFV (401 aa)) enclose the Peptidase A1 domain. Asp-80 is an active-site residue. 7 disulfide bridges follow: Cys-90–Cys-172, Cys-93–Cys-96, Cys-117–Cys-128, Cys-122–Cys-133, Cys-220–Cys-466, Cys-337–Cys-382, and Cys-391–Cys-427. A compositionally biased stretch (low complexity) spans 244 to 258 (SKSVSGQGSGPVSES). Residues 244-264 (SKSVSGQGSGPVSESLSESGE) form a disordered region. Asp-313 is a catalytic residue. Residues 493-513 (FFYLYSLFVVFALSVLLSLVF) form a helical membrane-spanning segment. The Cytoplasmic segment spans residues 514–536 (YVRRLYHMEYSPLPSEGKAPADA).

The protein belongs to the peptidase A1 family. As to quaternary structure, component of a complex composed of SPC25 and PMV; the interaction is mediated via the transmembrane domains. The complex interacts with the SEC61 channel-forming translocon complex and is involved in the recognition and import of PEXEL motif-containing proteins into the ER for subsequent export. In terms of processing, it is not clear if the zymogen has a cleavable propeptide. Cleavage of the putative propeptide is dispensable for catalytic activity.

It is found in the endoplasmic reticulum membrane. Inhibited by peptidomimetic inhibitors such as WEHI-842. In terms of biological role, during the asexual blood stage, plays an essential role in the export of several proteins into the host erythrocytes by cleaving the pentameric localization motif RxLxE/Q/D (termed Plasmodium export element (PEXEL)) located downstream of the N-terminal secretory signal sequence. Specifically, cleaves after the leucine residue in the RxLxE/Q/D (or RxLxxE) motif of exported proteins including EMP1. Also, by regulating protein export, plays an essential role in gametocyte development and thus parasite transmission to the mosquito vector. In Plasmodium vivax (strain Salvador I), this protein is Plasmepsin V.